The primary structure comprises 232 residues: BTB/POZ domain-containing protein KCTD11 (232 aa).

In terms of domain architecture, BTB spans 1-49 (MLGAMFRADTLMPANLNPQGDGHYFIDRDGKAFRHILNFLRLGRLDLPR).

In terms of assembly, homopentamer. Interacts with KCTD6 and KCTD21; KCTD11 and KCTD6 or KCTD21 may associate in pentameric assemblies. Component of the BCR(KCTD11) E3 ubiquitin ligase complex, at least composed of CUL3 and KCTD11 and RBX1. Interacts (via BTB domain) with CUL3; initially a 4:4 stoichiometry has been reported, however, electron microscopy revealed pentameric states of the BTB domain. In terms of tissue distribution, weakly expressed in lung. In the cerebellum, higher expression in non proliferating external granule cells layer than in highly proliferating ones.

The protein operates within protein modification; protein ubiquitination. Functionally, plays a role as a marker and a regulator of neuronal differentiation; Up-regulated by a variety of neurogenic signals, such as retinoic acid, epidermal growth factor/EGF and NGFB/nerve growth factor. Induces apoptosis, growth arrest and the expression of cyclin-dependent kinase inhibitor CDKN1B. Plays a role as a tumor repressor and inhibits cell growth and tumorigenicity of medulloblastoma (MDB). Acts as a probable substrate-specific adapter for a BCR (BTB-CUL3-RBX1) E3 ubiquitin-protein ligase complex towards HDAC1. Functions as antagonist of the Hedgehog pathway on cell proliferation and differentiation by affecting the nuclear transfer of transcription factor GLI1, thus maintaining cerebellar granule cells in undifferentiated state, this effect probably occurs via HDAC1 down-regulation, keeping GLI1 acetylated and inactive. When knock-down, Hedgehog antagonism is impaired and proliferation of granule cells is sustained. Activates the caspase cascade. This Mus musculus (Mouse) protein is BTB/POZ domain-containing protein KCTD11 (Kctd11).